The following is a 577-amino-acid chain: Thrombomodulin (577 aa).

The first 16 residues, 1-16, serve as a signal peptide directing secretion; the sequence is MLGIFFLGVLAPASLG. Residues 17–517 are Extracellular-facing; sequence LSALAKLQPT…GPPSARPVHS (501 aa). In terms of domain architecture, C-type lectin spans 31-167; it reads VEHECFALFQ…TETQGFLCEF (137 aa). An N-linked (GlcNAc...) asparagine glycan is attached at Asn-113. The cysteines at positions 135 and 156 are disulfide-linked. EGF-like domains are found at residues 240 to 280 and 283 to 323; these read GAWN…RSCA and VVQS…HRCE. An N-linked (GlcNAc...) asparagine glycan is attached at Asn-243. 18 cysteine pairs are disulfide-bonded: Cys-244–Cys-255, Cys-251–Cys-264, Cys-266–Cys-279, Cys-287–Cys-295, Cys-291–Cys-307, Cys-309–Cys-322, Cys-328–Cys-339, Cys-335–Cys-348, Cys-350–Cys-361, Cys-368–Cys-377, Cys-373–Cys-387, Cys-389–Cys-403, Cys-407–Cys-416, Cys-412–Cys-424, Cys-426–Cys-438, Cys-444–Cys-454, Cys-449–Cys-463, and Cys-465–Cys-479. N-linked (GlcNAc...) asparagine glycosylation occurs at Asn-256. Residues 324-362 form the EGF-like 3; calcium-binding domain; the sequence is DVDDCKQGPNPCPQLCVNTKGGFECFCYDGYELVDGECV. 2 EGF-like domains span residues 364–404 and 403–439; these read LLDP…HKCE and CEMF…SVCT. Asn-408 is a glycosylation site (N-linked (GlcNAc...) asparagine). An EGF-like 6; calcium-binding domain is found at 440–480; it reads DIDECSQGECFTSECRNFPGSYECICGPDTALAGQISKDCD. The tract at residues 476-513 is disordered; it reads SKDCDPIPVREDTKEEEGSGEPPVSPTPGSPTGPPSAR. The span at 477–492 shows a compositional bias: basic and acidic residues; the sequence is KDCDPIPVREDTKEEE. An O-linked (Xyl...) (chondroitin sulfate) serine glycan is attached at Ser-494. A compositionally biased stretch (pro residues) spans 498 to 512; the sequence is PVSPTPGSPTGPPSA. The chain crosses the membrane as a helical span at residues 518 to 541; that stretch reads GVLIGISIASLSLVVALLALLCHL. Residues 542 to 577 are Cytoplasmic-facing; it reads RKKQGAARAELEYKCASSAKEVVLQHVRTDRTLQKF.

As to quaternary structure, interacts with ITGAL, ITGAM and ITGB2. Interacts with thrombin/F2; this interaction switches the specificity of thrombin from a procoagulant to an anticoagulant and antifibrinolytic protease. Interacts with ANGP1 and ANGP2; these interactions significantly inhibit the generation of activated PC and TAFIa/CPB2 by the thrombin/thrombomodulin complex. Interacts with PF4; this interaction enhances generation of activated protein C. Interacts with HMGB1; this interaction inhibits HMGB1 inflammatory activity. Endothelial cells are unique in synthesizing thrombomodulin.

Its subcellular location is the membrane. Functionally, endothelial cell receptor that plays a critical role in regulating several physiological processes including hemostasis, coagulation, fibrinolysis, inflammation, and angiogenesis. Acts as a cofactor for thrombin activation of protein C/PROC on the surface of vascular endothelial cells leading to initiation of the activated protein C anticoagulant pathway. Also accelerates the activation of the plasma carboxypeptidase B2/CPB2, which catalyzes removal of C-terminal basic amino acids from its substrates including kinins or anaphylatoxins leading to fibrinolysis inhibition. Plays critical protective roles in changing the cleavage specificity of protease-activated receptor 1/PAR1, inhibiting endothelial cell permeability and inflammation. Suppresses inflammation distinctly from its anticoagulant cofactor activity by sequestering HMGB1 thereby preventing it from engaging cellular receptors such as RAGE and contributing to the inflammatory response. This chain is Thrombomodulin (Thbd), found in Mus musculus (Mouse).